The chain runs to 206 residues: Ribosomal RNA small subunit methyltransferase G (206 aa).

S-adenosyl-L-methionine contacts are provided by residues G74, L79, 125–126 (VE), and R140.

This sequence belongs to the methyltransferase superfamily. RNA methyltransferase RsmG family.

The protein localises to the cytoplasm. The enzyme catalyses guanosine(527) in 16S rRNA + S-adenosyl-L-methionine = N(7)-methylguanosine(527) in 16S rRNA + S-adenosyl-L-homocysteine. In terms of biological role, specifically methylates the N7 position of guanine in position 527 of 16S rRNA. The polypeptide is Ribosomal RNA small subunit methyltransferase G (Shewanella putrefaciens (strain CN-32 / ATCC BAA-453)).